Here is a 674-residue protein sequence, read N- to C-terminus: HDA1 complex subunit 2 (674 aa).

A compositionally biased stretch (polar residues) spans 185-196 (TVDSTINKDGTP). A disordered region spans residues 185–211 (TVDSTINKDGTPNSVSSTSSNSNSTSY). Over residues 197-211 (NSVSSTSSNSNSTSY) the composition is skewed to low complexity. A coiled-coil region spans residues 468–637 (FKKKQEVEKS…RNKFLKNYIT (170 aa)).

The protein belongs to the HDA2/3 family. HDA2 subfamily. In terms of assembly, heterodimer with HDA3. Component of the HDA1 histone deacetylase complex composed of at least one HDA1 homodimer and one HDA2/HDA3 heterodimer. Interacts with HDA1 and HDA3.

Its subcellular location is the nucleus. Required for activity of HDA1 histone deacetylase complex. The HDA1 histone deacetylase complex is responsible for the deacetylation of lysine residues on the N-terminal part of the core histones (H2A, H2B, H3 and H4). Histone deacetylation gives a tag for epigenetic repression and plays an important role in transcriptional regulation, cell cycle progression and developmental events. The sequence is that of HDA1 complex subunit 2 (HDA2) from Saccharomyces cerevisiae (strain ATCC 204508 / S288c) (Baker's yeast).